A 1399-amino-acid chain; its full sequence is MSNSVVHNLLNRGLIRPLNFEHQNKLNSSVYQTSTANPALGKIGRSKLYGKGLKQAGRSLVTETGGRPLSFVPRAVLAMDPQAAEKFSLDGNIDLLVEVTSTTVREVNIQIAYTSDTLFLHWGAILDNKENWVLPSRSPDRTQNFKNSALRTPFVKSGGNSHLKLEIDDPAIHAIEFLIFDESRNKWYKNNGQNFHINLPTERNVKQNVSVPEDLVQIQAYLRWERKGKQMYNPEKEKEEYEAARTELREEMMRGASVEDLRAKLLKKDNSNESPKSNGTSSSGREEKKKVSKQPERKKNYNTDKIQRKGRDLTKLIYKHVADFVEPESKSSSEPRSLTTLEIYAKAKEEQETTPVFSKKTFKLEGSAILVFVTKLSGKTKIHVATDFKEPVTLHWALSQKGGEWLDPPSDILPPNSLPVRGAVDTKLTITSTDLPSPVQTFELEIEGDSYKGMPFVLNAGERWIKNNDSDFYVDFAKEEKHVQKDYGDGKGTAKHLLDKIADLESEAQKSFMHRFNIAADLVDEAKSAGQLGFAGILVWMRFMATRQLVWNKNYNVKPREISKAQDRLTDLLQDVYASYPEYRELLRMIMSTVGRGGEGDVGQRIRDEILVIQRKNDCKGGIMEEWHQKLHNNTSPDDVVICQALMDYIKSDFDLSVYWKTLNDNGITKERLLSYDRAIHSEPNFRGEQKDGLLRDLGHYMRTLKAVHSGADLESAIQNCMGYQDDGEGFMVGVQINPVSGLPSGYPDLLRFVLEHVEEKNVEPLLEGLLEARQELRPLLLKSHDRLKDLLFLDLALDSTVRTAIERGYEQLNDAGPEKIMYFISLVLENLALSSDDNEDLIYCLKGWQFALDMCKSKKDHWALYAKSVLDRSRLALASKAERYLEILQPSAEYLGSCLGVDQSAVSIFTEEIIRAGSAAALSSLVNRLDPVLRKTANLGSWQVISPVEVVGYVIVVDELLTVQNKTYDRPTIIVANRVRGEEEIPDGAVAVLTPDMPDVLSHVSVRARNGKICFATCFDSGILSDLQGKDGKLLSLQPTSADVVYKEVNDSELSSPSSDNLEDAPPSISLVKKQFAGRYAISSEEFTSDLVGAKSRNIGYLKGKVPSWVGIPTSVALPFGVFEKVISEKANQAVNDKLLVLKKTLDEGDQGALKEIRQTLLGLVAPPELVEELKSTMKSSDMPWPGDEGEQRWEQAWAAIKKVWASKWNERAYFSTRKVKLDHDYLCMAVLVQEVINADYAFVIHTTNPSSGDSSEIYAEVVKGLGETLVGAYPGRSLSFICKKNNLDSPLVLGYPSKPIGLFIRRSIIFRSDSNGEDLEGYAGAGLYDSVPMDEEDQVVLDYTTDPLITDLSFQKKVLSDIARAGDAIEKLYGTAQDIEGVIRDGKLYVVQTRPQV.

A chloroplast-targeting transit peptide spans 1–75; it reads MSNSVVHNLL…GRPLSFVPRA (75 aa). Val-76 bears the N-acetylvaline mark. A disordered region spans residues 265 to 306; it reads LLKKDNSNESPKSNGTSSSGREEKKKVSKQPERKKNYNTDKI. The segment covering 272–283 has biased composition (polar residues); it reads NESPKSNGTSSS. Basic and acidic residues predominate over residues 284–306; it reads GREEKKKVSKQPERKKNYNTDKI. His-1004 serves as the catalytic Tele-phosphohistidine intermediate.

This sequence belongs to the PEP-utilizing enzyme family. As to quaternary structure, homodimer. Requires Mg(2+) as cofactor.

Its subcellular location is the plastid. It localises to the chloroplast. It carries out the reaction [(1-&gt;4)-alpha-D-glucosyl](n) + n ATP + n H2O = [(1-&gt;4)-6-phospho-alpha-D-glucosyl](n) + n AMP + n phosphate + 2n H(+). Mediates the incorporation of phosphate into starch-like alpha-glucan, mostly at the C-6 position of glucose units. Acts as an overall regulator of starch mobilization. Required for starch degradation, suggesting that the phosphate content of starch regulates its degradability. This Arabidopsis thaliana (Mouse-ear cress) protein is Alpha-glucan water dikinase 1, chloroplastic.